The sequence spans 440 residues: Fibulin-7 (440 aa).

An N-terminal signal peptide occupies residues 1–24 (MGPGSQRALFLLLLLLASPGARAF). The stretch at 28–73 (LNKQQLLTTIRQLQQLLKGQETRFTEGIRNMKSRLAALQNTVNKMT) forms a coiled coil. In terms of domain architecture, Sushi spans 79–136 (VSCPALEAPPDGKKFGSKYLVDHEVYFTCNPGFQLVGPSSVVCLANGSWTGEQPRCRD). 11 cysteine pairs are disulfide-bonded: C81-C121, C107-C134, C140-C151, C145-C160, C162-C171, C229-C245, C241-C254, C256-C269, C275-C288, C282-C297, and C302-C319. N124 carries an N-linked (GlcNAc...) asparagine glycan. An EGF-like 1; calcium-binding domain is found at 136–172 (DISECSSQPCHNGGTCVEGINHYRCICPPGKTGNRCQ). The EGF-like 2; calcium-binding domain occupies 225–270 (DVNECEIYGQKGRPRLCMHACVNTPGSYRCTCPSGYRILADGKSCE). In terms of domain architecture, EGF-like 3; calcium-binding spans 271–320 (DVDECAGPQHMCPRGTTCINTGGGFQCVNPECPEGSGNISYVKTSPFQCE). N308 carries an N-linked (GlcNAc...) asparagine glycan.

Belongs to the fibulin family. As to quaternary structure, interacts with heparin, FBLN1, FN1 and DSPP. Preferentially binds dental mesenchyme cells and odontoblasts but not dental epithelial cells or nondental cells. Binding requires a heparan sulfate-containing receptor on the cell surface as well as an integrin. Post-translationally, N-glycosylated. In terms of tissue distribution, highly expressed in newborn incisors and molars. A weaker expression is seen in the brain, kidneys, muscles and bones.

It is found in the secreted. Its subcellular location is the extracellular space. It localises to the extracellular matrix. An adhesion molecule that interacts with extracellular matrix molecules in developing teeth and may play important roles in differentiation and maintenance of odontoblasts as well as in dentin formation. This is Fibulin-7 (Fbln7) from Mus musculus (Mouse).